A 249-amino-acid chain; its full sequence is Ubiquinone biosynthesis O-methyltransferase (249 aa).

Residues R41, G72, D93, and M136 each coordinate S-adenosyl-L-methionine.

It belongs to the methyltransferase superfamily. UbiG/COQ3 family.

The enzyme catalyses a 3-demethylubiquinol + S-adenosyl-L-methionine = a ubiquinol + S-adenosyl-L-homocysteine + H(+). It carries out the reaction a 3-(all-trans-polyprenyl)benzene-1,2-diol + S-adenosyl-L-methionine = a 2-methoxy-6-(all-trans-polyprenyl)phenol + S-adenosyl-L-homocysteine + H(+). The protein operates within cofactor biosynthesis; ubiquinone biosynthesis. In terms of biological role, O-methyltransferase that catalyzes the 2 O-methylation steps in the ubiquinone biosynthetic pathway. The chain is Ubiquinone biosynthesis O-methyltransferase from Mesorhizobium japonicum (strain LMG 29417 / CECT 9101 / MAFF 303099) (Mesorhizobium loti (strain MAFF 303099)).